The sequence spans 293 residues: Small ribosomal subunit biogenesis GTPase RsgA (293 aa).

The region spanning 63-223 is the CP-type G domain; sequence KNELVRPPIA…VADTPGFSSL (161 aa). GTP contacts are provided by residues 112–115 and 166–174; these read SKMD and GQSGVGKSS. 4 residues coordinate Zn(2+): Cys-247, Cys-252, His-254, and Cys-260.

Belongs to the TRAFAC class YlqF/YawG GTPase family. RsgA subfamily. Monomer. Associates with 30S ribosomal subunit, binds 16S rRNA. The cofactor is Zn(2+).

It localises to the cytoplasm. One of several proteins that assist in the late maturation steps of the functional core of the 30S ribosomal subunit. Helps release RbfA from mature subunits. May play a role in the assembly of ribosomal proteins into the subunit. Circularly permuted GTPase that catalyzes slow GTP hydrolysis, GTPase activity is stimulated by the 30S ribosomal subunit. This is Small ribosomal subunit biogenesis GTPase RsgA from Bacillus cereus (strain ATCC 14579 / DSM 31 / CCUG 7414 / JCM 2152 / NBRC 15305 / NCIMB 9373 / NCTC 2599 / NRRL B-3711).